Consider the following 607-residue polypeptide: Chaperone protein DnaK (607 aa).

Thr-173 carries the post-translational modification Phosphothreonine; by autocatalysis. Residues 577-588 (AQAQQGAEGAAS) show a composition bias toward low complexity. The interval 577 to 607 (AQAQQGAEGAASQDDDVVDADFTEVKDDDNK) is disordered. The segment covering 589–598 (QDDDVVDADF) has biased composition (acidic residues).

The protein belongs to the heat shock protein 70 family.

Acts as a chaperone. The polypeptide is Chaperone protein DnaK (Macrococcus caseolyticus (strain JCSC5402) (Macrococcoides caseolyticum)).